The chain runs to 180 residues: Acireductone dioxygenase (180 aa).

Fe(2+) contacts are provided by H97, H99, E103, and H141. Residues H97, H99, E103, and H141 each contribute to the Ni(2+) site.

It belongs to the acireductone dioxygenase (ARD) family. Monomer. Requires Fe(2+) as cofactor. It depends on Ni(2+) as a cofactor.

It catalyses the reaction 1,2-dihydroxy-5-(methylsulfanyl)pent-1-en-3-one + O2 = 3-(methylsulfanyl)propanoate + CO + formate + 2 H(+). It carries out the reaction 1,2-dihydroxy-5-(methylsulfanyl)pent-1-en-3-one + O2 = 4-methylsulfanyl-2-oxobutanoate + formate + 2 H(+). The protein operates within amino-acid biosynthesis; L-methionine biosynthesis via salvage pathway; L-methionine from S-methyl-5-thio-alpha-D-ribose 1-phosphate: step 5/6. Catalyzes 2 different reactions between oxygen and the acireductone 1,2-dihydroxy-3-keto-5-methylthiopentene (DHK-MTPene) depending upon the metal bound in the active site. Fe-containing acireductone dioxygenase (Fe-ARD) produces formate and 2-keto-4-methylthiobutyrate (KMTB), the alpha-ketoacid precursor of methionine in the methionine recycle pathway. Ni-containing acireductone dioxygenase (Ni-ARD) produces methylthiopropionate, carbon monoxide and formate, and does not lie on the methionine recycle pathway. This chain is Acireductone dioxygenase, found in Klebsiella pneumoniae subsp. pneumoniae (strain ATCC 700721 / MGH 78578).